The following is a 454-amino-acid chain: Bifunctional protein GlmU (454 aa).

The pyrophosphorylase stretch occupies residues 1-226 (MSTTVIILAA…AFEVEGVNDR (226 aa)). UDP-N-acetyl-alpha-D-glucosamine is bound by residues 8 to 11 (LAAG), Lys-22, Gln-73, 78 to 79 (GT), 100 to 102 (YGD), Gly-137, Glu-151, Asn-166, and Asn-224. Asp-102 contacts Mg(2+). Asn-224 is a binding site for Mg(2+). Positions 227–247 (LQLAALEREFQKQQAKELMQQ) are linker. Residues 248 to 454 (GVTFADPARF…NYQRPQKLKK (207 aa)) form an N-acetyltransferase region. UDP-N-acetyl-alpha-D-glucosamine contacts are provided by Arg-330 and Lys-348. His-360 serves as the catalytic Proton acceptor. UDP-N-acetyl-alpha-D-glucosamine-binding residues include Tyr-363 and Asn-374. Acetyl-CoA contacts are provided by residues Ala-377, 383–384 (NY), Ser-402, Ala-420, and Arg-437.

This sequence in the N-terminal section; belongs to the N-acetylglucosamine-1-phosphate uridyltransferase family. It in the C-terminal section; belongs to the transferase hexapeptide repeat family. Homotrimer. Requires Mg(2+) as cofactor.

It is found in the cytoplasm. The catalysed reaction is alpha-D-glucosamine 1-phosphate + acetyl-CoA = N-acetyl-alpha-D-glucosamine 1-phosphate + CoA + H(+). The enzyme catalyses N-acetyl-alpha-D-glucosamine 1-phosphate + UTP + H(+) = UDP-N-acetyl-alpha-D-glucosamine + diphosphate. The protein operates within nucleotide-sugar biosynthesis; UDP-N-acetyl-alpha-D-glucosamine biosynthesis; N-acetyl-alpha-D-glucosamine 1-phosphate from alpha-D-glucosamine 6-phosphate (route II): step 2/2. Its pathway is nucleotide-sugar biosynthesis; UDP-N-acetyl-alpha-D-glucosamine biosynthesis; UDP-N-acetyl-alpha-D-glucosamine from N-acetyl-alpha-D-glucosamine 1-phosphate: step 1/1. It functions in the pathway bacterial outer membrane biogenesis; LPS lipid A biosynthesis. Functionally, catalyzes the last two sequential reactions in the de novo biosynthetic pathway for UDP-N-acetylglucosamine (UDP-GlcNAc). The C-terminal domain catalyzes the transfer of acetyl group from acetyl coenzyme A to glucosamine-1-phosphate (GlcN-1-P) to produce N-acetylglucosamine-1-phosphate (GlcNAc-1-P), which is converted into UDP-GlcNAc by the transfer of uridine 5-monophosphate (from uridine 5-triphosphate), a reaction catalyzed by the N-terminal domain. The protein is Bifunctional protein GlmU of Acinetobacter baumannii (strain AYE).